Reading from the N-terminus, the 91-residue chain is Non-specific lipid-transfer protein 1 (91 aa).

Disulfide bonds link Cys4-Cys51, Cys14-Cys28, Cys29-Cys74, and Cys49-Cys88.

Belongs to the plant LTP family. As to expression, detected in seeds (at protein level).

Plant non-specific lipid-transfer proteins transfer phospholipids as well as galactolipids across membranes. May play a role in wax or cutin deposition in the cell walls of expanding epidermal cells and certain secretory tissues. The polypeptide is Non-specific lipid-transfer protein 1 (Carum carvi (Caraway)).